Reading from the N-terminus, the 483-residue chain is Protein adenylyltransferase Fic (483 aa).

A helical transmembrane segment spans residues 20 to 42 (AFFFIAGSLATFVFHALTSSSSV). TPR repeat units follow at residues 107–140 (ALGAMRLALDMHISGKDDKAARLFEHALALAPKH) and 141–175 (PEVLLRYGEFLEHNQRNIVLADQYYFQALSISPSN). The Inhibitory (S/T)XXXE(G/N) motif motif lies at 232 to 237 (SVGIEG). Residues glutamate 236 and 317-320 (VGGH) each bind ATP. The region spanning 286-421 (ITLKDILELH…IRPFVRFIAD (136 aa)) is the Fido domain. The active site involves histidine 364. ATP contacts are provided by residues 368 to 375 (DGNGRTSR), 400 to 401 (YY), and asparagine 408. The segment at 464–483 (SAPEPYESGSGLDSGVNGMP) is disordered.

The protein belongs to the fic family. In terms of assembly, homodimer.

The protein localises to the membrane. The catalysed reaction is L-tyrosyl-[protein] + ATP = O-(5'-adenylyl)-L-tyrosyl-[protein] + diphosphate. It catalyses the reaction L-threonyl-[protein] + ATP = 3-O-(5'-adenylyl)-L-threonyl-[protein] + diphosphate. It carries out the reaction 3-O-(5'-adenylyl)-L-threonyl-[protein] + H2O = L-threonyl-[protein] + AMP + H(+). The side chain of Glu-236 determines which of the two opposing activities (AMPylase or de-AMPylase) will take place. In response to endoplasmic reticulum stress, mediates de-AMPylase activity. Adenylyltransferase activity is inhibited by the inhibitory helix present at the N-terminus: Glu-236 binds ATP and competes with ATP-binding at Arg-375, thereby preventing adenylyltransferase activity. In unstressed cells, disengagement of Glu-236 promotes adenylyltransferase activity. Activation dissociates ATP-binding from Glu-236, allowing ordered binding of the entire ATP moiety with the alpha-phosphate in an orientation that is productive for accepting an incoming target hydroxyl side chain. Protein that can both mediate the addition of adenosine 5'-monophosphate (AMP) to specific residues of target proteins (AMPylation), and the removal of the same modification from target proteins (de-AMPylation), depending on the context. The side chain of Glu-236 determines which of the two opposing activities (AMPylase or de-AMPylase) will take place. Acts as a key regulator of the unfolded protein response (UPR) by mediating AMPylation or de-AMPylation of Hsc70-3/BiP. In unstressed cells, acts as an adenylyltransferase by mediating AMPylation of Hsc70-3/BiP at 'Thr-518', thereby inactivating it. In response to endoplasmic reticulum stress, acts as a phosphodiesterase by mediating removal of ATP (de-AMPylation) from Hsc70-3/BiP at 'Thr-518', leading to restore HSPA5/BiP activity. This Drosophila grimshawi (Hawaiian fruit fly) protein is Protein adenylyltransferase Fic.